The primary structure comprises 281 residues: HTH-type transcriptional activator RamA (281 aa).

Residues Arg213–Gly278 form the HTH luxR-type domain.

In terms of biological role, ramA is a master regulator of acetate metabolism. It positively controls the expression of acnA, aceA, aceB, ack, pta and ramB genes in the presence of acetate. RamA is also a positive regulator of rpf2 gene expression during growth on glucose as the sole carbon source. This Corynebacterium glutamicum (strain ATCC 13032 / DSM 20300 / JCM 1318 / BCRC 11384 / CCUG 27702 / LMG 3730 / NBRC 12168 / NCIMB 10025 / NRRL B-2784 / 534) protein is HTH-type transcriptional activator RamA.